The following is an 83-amino-acid chain: uncharacterized protein (83 aa).

The chain crosses the membrane as a helical span at residues 58 to 78; that stretch reads AVLLWIAIIATLGNIVVVGVV.

The protein localises to the membrane. This is an uncharacterized protein from Homo sapiens (Human).